The following is a 109-amino-acid chain: Large ribosomal subunit protein uL24 (109 aa).

Belongs to the universal ribosomal protein uL24 family. In terms of assembly, part of the 50S ribosomal subunit.

Its function is as follows. One of two assembly initiator proteins, it binds directly to the 5'-end of the 23S rRNA, where it nucleates assembly of the 50S subunit. One of the proteins that surrounds the polypeptide exit tunnel on the outside of the subunit. In Rickettsia akari (strain Hartford), this protein is Large ribosomal subunit protein uL24.